The sequence spans 401 residues: MTSSRFGRLAPGVRDVLPAEAHLMRGLKEKFTKLVETWGYKEVVTPTFEYMENLASEELQEEKFFKFLDRQGHLMALRPDMTRPMARLVATRMKGITPPLRLFYLANVFNYEQPQVGRQREFYQAGVELMGPSSPEADAEVVAMVAEYLMQTGLADFQISIGNVGIFHGLVKQLGLPKEVAQELKEALGNKDFVKVEEILGSHAATPEEARRTLDLIELRGGPEILDRAFGLAQPGPAADAIDNLRQLYWGLTCYGVERHITLDLGLLRGLDYYTGLVFEGYTVAMGFPICGGGRYNQLLAKFGLPMPATGFAVNLERVLVALERLQGPPREPVPDVLVAWEDNSLANALQCVKELRYQGLKVVTAMFEYPPAKAKAEARSLGASRVIYFDKEGKSEELSL.

This sequence belongs to the class-II aminoacyl-tRNA synthetase family. HisZ subfamily. Heteromultimer composed of HisG and HisZ subunits.

Its subcellular location is the cytoplasm. It participates in amino-acid biosynthesis; L-histidine biosynthesis; L-histidine from 5-phospho-alpha-D-ribose 1-diphosphate: step 1/9. In terms of biological role, required for the first step of histidine biosynthesis. May allow the feedback regulation of ATP phosphoribosyltransferase activity by histidine. This chain is ATP phosphoribosyltransferase regulatory subunit, found in Desulforamulus reducens (strain ATCC BAA-1160 / DSM 100696 / MI-1) (Desulfotomaculum reducens).